The chain runs to 136 residues: Large ribosomal subunit protein uL16c (136 aa).

Belongs to the universal ribosomal protein uL16 family. In terms of assembly, part of the 50S ribosomal subunit.

Its subcellular location is the plastid. The protein localises to the chloroplast. The chain is Large ribosomal subunit protein uL16c from Chlamydomonas sp. (strain WXM).